Reading from the N-terminus, the 477-residue chain is Aspartyl/glutamyl-tRNA(Asn/Gln) amidotransferase subunit B (477 aa).

The protein belongs to the GatB/GatE family. GatB subfamily. In terms of assembly, heterotrimer of A, B and C subunits.

It catalyses the reaction L-glutamyl-tRNA(Gln) + L-glutamine + ATP + H2O = L-glutaminyl-tRNA(Gln) + L-glutamate + ADP + phosphate + H(+). It carries out the reaction L-aspartyl-tRNA(Asn) + L-glutamine + ATP + H2O = L-asparaginyl-tRNA(Asn) + L-glutamate + ADP + phosphate + 2 H(+). In terms of biological role, allows the formation of correctly charged Asn-tRNA(Asn) or Gln-tRNA(Gln) through the transamidation of misacylated Asp-tRNA(Asn) or Glu-tRNA(Gln) in organisms which lack either or both of asparaginyl-tRNA or glutaminyl-tRNA synthetases. The reaction takes place in the presence of glutamine and ATP through an activated phospho-Asp-tRNA(Asn) or phospho-Glu-tRNA(Gln). This Bdellovibrio bacteriovorus (strain ATCC 15356 / DSM 50701 / NCIMB 9529 / HD100) protein is Aspartyl/glutamyl-tRNA(Asn/Gln) amidotransferase subunit B.